We begin with the raw amino-acid sequence, 71 residues long: Cold shock-like protein CspB (71 aa).

A CSD domain is found at 7 to 67 (GLVKWFNADK…GAKGPAAANV (61 aa)).

Its subcellular location is the cytoplasm. The sequence is that of Cold shock-like protein CspB (cspB) from Escherichia coli (strain K12).